Here is a 153-residue protein sequence, read N- to C-terminus: Nitrogen regulatory protein (153 aa).

The PTS EIIA type-2 domain occupies 5–148; that stretch reads DLVAPEAILP…QAIYSVLALP (144 aa). H66 acts as the Tele-phosphohistidine intermediate in catalysis.

It localises to the cytoplasm. Functionally, seems to have a role in regulating nitrogen assimilation. In Bradyrhizobium diazoefficiens (strain JCM 10833 / BCRC 13528 / IAM 13628 / NBRC 14792 / USDA 110), this protein is Nitrogen regulatory protein (ptsN).